The chain runs to 338 residues: MLSALARPAGAALRRSFSTSXQNNAKVAVLGASGGIGQPLSLLLKNSPLVSRLTLYDIAHTPGVAADLSHIETRATVKGYLGPEQLPDCLKGCDVVVIPAGVPRKPGMTRDDLFNTNATIVATLTAACAQHCPDAMICIISNPVNSTIPITAEVFKKHGVYNPNKIFGVTTLDIVRANAFVAELKGLDPARVSVPVIGGHAGKTIIPLISQCTPKVDFPQDQLSTLTGRIQEAGTEVVKAKAGAGSATLSMAYAGARFVFSLVDAMNGKEGVVECSFVKSQETDCPYFSTPLLLGKKGIEKNLGIGKISPFEEKMIAEAIPELKASIKKGEEFVKNMK.

The N-terminal 24 residues, 1 to 24 (MLSALARPAGAALRRSFSTSXQNN), are a transit peptide targeting the mitochondrion. Residues 31–37 (GASGGIG) and Asp-57 each bind NAD(+). O-linked (GlcNAc) serine glycosylation is present at Ser-33. An N6-acetyllysine; alternate mark is found at Lys-78 and Lys-91. N6-succinyllysine; alternate occurs at positions 78 and 91. Arg-104 and Arg-110 together coordinate substrate. Residues Asn-117 and 140–142 (ISN) each bind NAD(+). Substrate is bound at residue Asn-142. Position 165 is an N6-acetyllysine (Lys-165). Residue Arg-176 coordinates substrate. Lys-185 carries the N6-acetyllysine; alternate modification. Lys-185 carries the post-translational modification N6-succinyllysine; alternate. The active-site Proton acceptor is His-200. Lys-203 carries the post-translational modification N6-succinyllysine. Residues Lys-215 and Lys-239 each carry the N6-acetyllysine; alternate modification. An N6-succinyllysine; alternate mark is found at Lys-215 and Lys-239. Lys-239 carries the post-translational modification N6-malonyllysine; alternate. Ser-246 is subject to Phosphoserine. Residue Met-251 coordinates NAD(+). N6-succinyllysine is present on Lys-269. 5 positions are modified to N6-acetyllysine; alternate: Lys-296, Lys-301, Lys-307, Lys-314, and Lys-324. An N6-succinyllysine; alternate mark is found at Lys-296, Lys-301, Lys-307, Lys-314, and Lys-324. Lys-307 is modified (N6-malonyllysine; alternate). At Ser-326 the chain carries Phosphoserine. Lys-328, Lys-329, and Lys-335 each carry N6-acetyllysine; alternate. Lys-328 carries the post-translational modification N6-succinyllysine; alternate. An N6-malonyllysine; alternate modification is found at Lys-329. At Lys-335 the chain carries N6-succinyllysine; alternate.

Belongs to the LDH/MDH superfamily. MDH type 1 family. As to quaternary structure, homodimer. Acetylation is enhanced after treatment either with trichostin A (TCA) or with nicotinamide (NAM) with the appearance of tri- and tetraacetylations. Glucose also increases acetylation.

The protein localises to the mitochondrion matrix. It carries out the reaction (S)-malate + NAD(+) = oxaloacetate + NADH + H(+). Enzyme activity is enhanced by acetylation. In Sus scrofa (Pig), this protein is Malate dehydrogenase, mitochondrial (MDH2).